The following is a 183-amino-acid chain: Glutamyl-tRNA(Gln) amidotransferase subunit F, mitochondrial (183 aa).

It belongs to the GatF family. In terms of assembly, subunit of the heterotrimeric GatFAB amidotransferase (AdT) complex, composed of A (HER2), B (PET112) and F (YGR102C) subunits.

The protein resides in the mitochondrion inner membrane. It catalyses the reaction L-glutamyl-tRNA(Gln) + L-glutamine + ATP + H2O = L-glutaminyl-tRNA(Gln) + L-glutamate + ADP + phosphate + H(+). Functionally, allows the formation of correctly charged Gln-tRNA(Gln) through the transamidation of misacylated Glu-tRNA(Gln) in the mitochondria. The reaction takes place in the presence of glutamine and ATP through an activated gamma-phospho-Glu-tRNA(Gln). Required for proper protein synthesis within the mitochondrion. The polypeptide is Glutamyl-tRNA(Gln) amidotransferase subunit F, mitochondrial (Saccharomyces cerevisiae (strain ATCC 204508 / S288c) (Baker's yeast)).